A 474-amino-acid polypeptide reads, in one-letter code: Dol-P-Glc:Glc(2)Man(9)GlcNAc(2)-PP-Dol alpha-1,2-glucosyltransferase (474 aa).

The Cytoplasmic portion of the chain corresponds to 1–6 (MAQLEG). A helical membrane pass occupies residues 7–27 (YYFSAALSCTFLVSCLLFSAF). At 28–64 (SRALREPYMDEIFHLPQAQRYCEGRFSLSQWDPMITT) the chain is on the extracellular side. The chain crosses the membrane as a helical span at residues 65–85 (LPGLYLVSVGVVKPASWILGW). The Cytoplasmic portion of the chain corresponds to 86–97 (SEHVVCSIGMLR). A helical membrane pass occupies residues 98-118 (FVNLLFSVGNFYLLYLLFRKI). Residues 119 to 126 (QPRNKASS) are Extracellular-facing. Residues 127–147 (SIQRILSTLTLAVFPTLYFFN) traverse the membrane as a helical segment. Residues 148–150 (FLY) lie on the Cytoplasmic side of the membrane. A helical transmembrane segment spans residues 151 to 171 (YTEAGSVFFTLFAYLMCLYGN). Topologically, residues 172–175 (HRTS) are extracellular. The helical transmembrane segment at 176–196 (ALLGFCGFMFRQTNIIWAAFC) threads the bilayer. Topologically, residues 197-256 (AGHIIAQKCSEAWKTELQKKKEERLPPAKGPLSELRRVLQFLLMYSMSLKNLSMLFLLTW) are cytoplasmic. A helical membrane pass occupies residues 257 to 277 (PYMLLLLAFFVFVVVNGGIVV). Residues 278–283 (GDRSSH) lie on the Extracellular side of the membrane. Residues 284 to 304 (EACLHFPQLFYFFSFTAFFSF) form a helical membrane-spanning segment. Over 305–317 (PHLLSPTKVKTFL) the chain is Cytoplasmic. The helical transmembrane segment at 318–338 (SLVWKRRVQFSVITLVSVFLV) threads the bilayer. The Extracellular segment spans residues 339–365 (WKFTYVHKYLLADNRHYTFYVWKRVFQ). The helical transmembrane segment at 366-386 (RHEIVKYLLVPAYMFAGWAVA) threads the bilayer. Over 387 to 392 (DSLKSK) the chain is Cytoplasmic. The chain crosses the membrane as a helical span at residues 393-413 (SIFWNLMFFVCLVASTVPQKL). At 414–436 (LEFRYFILPYIIYRLNMPLPPIS) the chain is on the extracellular side. The helical transmembrane segment at 437-457 (RLVCELGCYAVVNFLTFYIFL) threads the bilayer. Residues 458–473 (NKTFQWSDSHDIQRFM) are Cytoplasmic-facing.

It belongs to the ALG10 glucosyltransferase family. Interacts with KCNH1; may regulate KCNH1, possibly by regulating its N-glycosylation. Interacts with KCNH2; may reduce KCNH2 sensitivity to classic proarrhythmic drug blockade, possibly by regulating its N-glycosylation. Highly expressed in brain, skeletal muscle, uterus, small intestine and liver. Moderately expressed in lung and kidney. Weakly expressed in heart and stomach.

The protein localises to the endoplasmic reticulum membrane. It catalyses the reaction an alpha-D-Glc-(1-&gt;3)-alpha-D-Glc-(1-&gt;3)-alpha-D-Man-(1-&gt;2)-alpha-D-Man-(1-&gt;2)-alpha-D-Man-(1-&gt;3)-[alpha-D-Man-(1-&gt;2)-alpha-D-Man-(1-&gt;3)-[alpha-D-Man-(1-&gt;2)-alpha-D-Man-(1-&gt;6)]-alpha-D-Man-(1-&gt;6)]-beta-D-Man-(1-&gt;4)-beta-D-GlcNAc-(1-&gt;4)-alpha-D-GlcNAc-diphospho-di-trans,poly-cis-dolichol + a di-trans,poly-cis-dolichyl beta-D-glucosyl phosphate = a alpha-D-Glc-(1-&gt;2)-alpha-D-Glc-(1-&gt;3)-alpha-D-Glc-(1-&gt;3)-alpha-D-Man-(1-&gt;2)-alpha-D-Man-(1-&gt;2)-alpha-D-Man-(1-&gt;3)-[alpha-D-Man-(1-&gt;2)-alpha-D-Man-(1-&gt;3)-[alpha-D-Man-(1-&gt;2)-alpha-D-Man-(1-&gt;6)]-alpha-D-Man-(1-&gt;6)]-beta-D-Man-(1-&gt;4)-beta-D-GlcNAc-(1-&gt;4)-alpha-D-GlcNAc-diphospho-di-trans,poly-cis-dolichol + a di-trans,poly-cis-dolichyl phosphate + H(+). Its pathway is protein modification; protein glycosylation. In terms of biological role, dol-P-Glc:Glc(2)Man(9)GlcNAc(2)-PP-Dol alpha-1,2-glucosyltransferase that operates in the biosynthetic pathway of dolichol-linked oligosaccharides, the glycan precursors employed in protein asparagine (N)-glycosylation. The assembly of dolichol-linked oligosaccharides begins on the cytosolic side of the endoplasmic reticulum membrane and finishes in its lumen. The sequential addition of sugars to dolichol pyrophosphate produces dolichol-linked oligosaccharides containing fourteen sugars, including two GlcNAcs, nine mannoses and three glucoses. Once assembled, the oligosaccharide is transferred from the lipid to nascent proteins by oligosaccharyltransferases. In the lumen of the endoplasmic reticulum, adds the third and last glucose residue from dolichyl phosphate glucose (Dol-P-Glc) onto the lipid-linked oligosaccharide intermediate Glc(2)Man(9)GlcNAc(2)-PP-Dol to produce Glc(3)Man(9)GlcNAc(2)-PP-Dol. The protein is Dol-P-Glc:Glc(2)Man(9)GlcNAc(2)-PP-Dol alpha-1,2-glucosyltransferase of Rattus norvegicus (Rat).